The sequence spans 405 residues: Phosphopentomutase (405 aa).

Positions 10, 303, 308, 344, 345, and 356 each coordinate Mn(2+).

It belongs to the phosphopentomutase family. It depends on Mn(2+) as a cofactor.

It is found in the cytoplasm. The catalysed reaction is 2-deoxy-alpha-D-ribose 1-phosphate = 2-deoxy-D-ribose 5-phosphate. The enzyme catalyses alpha-D-ribose 1-phosphate = D-ribose 5-phosphate. It functions in the pathway carbohydrate degradation; 2-deoxy-D-ribose 1-phosphate degradation; D-glyceraldehyde 3-phosphate and acetaldehyde from 2-deoxy-alpha-D-ribose 1-phosphate: step 1/2. Its function is as follows. Isomerase that catalyzes the conversion of deoxy-ribose 1-phosphate (dRib-1-P) and ribose 1-phosphate (Rib-1-P) to deoxy-ribose 5-phosphate (dRib-5-P) and ribose 5-phosphate (Rib-5-P), respectively. The protein is Phosphopentomutase of Shewanella sediminis (strain HAW-EB3).